The following is a 545-amino-acid chain: Lysine--tRNA ligase (545 aa).

The short motif at 41 to 49 is the 'HIGH' region element; the sequence is PSGVPHLGH. The short motif at 306–310 is the 'KMSKS' region element; that stretch reads ALSSS.

It belongs to the class-I aminoacyl-tRNA synthetase family.

It is found in the cytoplasm. The enzyme catalyses tRNA(Lys) + L-lysine + ATP = L-lysyl-tRNA(Lys) + AMP + diphosphate. The polypeptide is Lysine--tRNA ligase (Natronomonas pharaonis (strain ATCC 35678 / DSM 2160 / CIP 103997 / JCM 8858 / NBRC 14720 / NCIMB 2260 / Gabara) (Halobacterium pharaonis)).